Reading from the N-terminus, the 537-residue chain is Multidrug resistance protein Stp (537 aa).

The next 14 helical transmembrane spans lie at 6–26 (LLTLIATGLGLFMIFLDALIV), 46–66 (WVVASYSLGMAVFIMSAATLA), 77–97 (IGVSLFTLGSIACGLAPSIAV), 104–124 (AQGLGAAAVSVTSLALVSAAF), 136–156 (IWTAIASIGTTTGPTLGGLLV), 163–183 (SIFYVNLPMGALVLFLTLCYV), 200–220 (LLFIVAVGALVYAVIEGPQIG), 223–243 (SVQTIVMLWTAAVGCALFVWL), 262–282 (YALAIATICTVFFAVYGMLLL), 300–320 (LMILPFSAAVAIVSPLVGHLV), 327–347 (VPILAGLCMLMLGLLMLIFSE), 352–372 (ALVLVGLGLCGSGVALCLTPI), 397–417 (AIGSTIGFAVLGSVLAAWLSA), and 478–498 (VALLVATATLAVVFLAGWRWF).

It belongs to the major facilitator superfamily. EmrB family.

It is found in the cell membrane. Functionally, contributes to spectinomycin and tetracycline resistance. The sequence is that of Multidrug resistance protein Stp (stp) from Mycobacterium tuberculosis (strain ATCC 25618 / H37Rv).